A 274-amino-acid chain; its full sequence is Proteasome subunit beta type-5-A (274 aa).

A propeptide spans 1–57 (removed in mature form); sequence MKLDTSGFETSMPMIGFGSSSDMLDELSSVPSFDLPRTKEFDGFQKKAKDMLKHAKG. Catalysis depends on threonine 58, which acts as the Nucleophile.

This sequence belongs to the peptidase T1B family. As to quaternary structure, component of the 20S core complex of the 26S proteasome. The 26S proteasome is composed of a core protease (CP), known as the 20S proteasome, capped at one or both ends by the 19S regulatory particle (RP/PA700). The 20S proteasome core is composed of 28 subunits that are arranged in four stacked rings, resulting in a barrel-shaped structure. The two end rings are each formed by seven alpha subunits, and the two central rings are each formed by seven beta subunits. The catalytic chamber with the active sites is on the inside of the barrel. Ubiquitous low levels, higher expression in siliques and flowers.

The protein localises to the cytoplasm. It is found in the nucleus. It catalyses the reaction Cleavage of peptide bonds with very broad specificity.. In terms of biological role, the proteasome is a multicatalytic proteinase complex which is characterized by its ability to cleave peptides with Arg, Phe, Tyr, Leu, and Glu adjacent to the leaving group at neutral or slightly basic pH. The proteasome has an ATP-dependent proteolytic activity. This chain is Proteasome subunit beta type-5-A (PBE1), found in Arabidopsis thaliana (Mouse-ear cress).